The chain runs to 244 residues: tRNA pseudouridine synthase A (244 aa).

D52 functions as the Nucleophile in the catalytic mechanism. Y110 contacts substrate.

It belongs to the tRNA pseudouridine synthase TruA family. Homodimer.

The enzyme catalyses uridine(38/39/40) in tRNA = pseudouridine(38/39/40) in tRNA. Its function is as follows. Formation of pseudouridine at positions 38, 39 and 40 in the anticodon stem and loop of transfer RNAs. In Clostridium acetobutylicum (strain ATCC 824 / DSM 792 / JCM 1419 / IAM 19013 / LMG 5710 / NBRC 13948 / NRRL B-527 / VKM B-1787 / 2291 / W), this protein is tRNA pseudouridine synthase A.